The chain runs to 513 residues: GMP synthase [glutamine-hydrolyzing] (513 aa).

Residues 9 to 198 (LILVLDFGSQ…VRRVCECKGQ (190 aa)) form the Glutamine amidotransferase type-1 domain. The active-site Nucleophile is cysteine 86. Residues histidine 172 and glutamate 174 contribute to the active site. A GMPS ATP-PPase domain is found at 199–388 (WTMENFIEIE…LGIPEHLVWR (190 aa)). 226–232 (SGGVDSS) lines the ATP pocket.

As to quaternary structure, homodimer.

The catalysed reaction is XMP + L-glutamine + ATP + H2O = GMP + L-glutamate + AMP + diphosphate + 2 H(+). The protein operates within purine metabolism; GMP biosynthesis; GMP from XMP (L-Gln route): step 1/1. Catalyzes the synthesis of GMP from XMP. This is GMP synthase [glutamine-hydrolyzing] from Staphylococcus aureus (strain MSSA476).